A 236-amino-acid polypeptide reads, in one-letter code: UPF0257 lipoprotein YnfC (236 aa).

Residues Met1–Gly16 form the signal peptide. Residue Cys17 is the site of N-palmitoyl cysteine attachment. The S-diacylglycerol cysteine moiety is linked to residue Cys17.

The protein belongs to the UPF0257 family.

The protein localises to the cell membrane. The polypeptide is UPF0257 lipoprotein YnfC (Escherichia coli O17:K52:H18 (strain UMN026 / ExPEC)).